Consider the following 468-residue polypeptide: Phosphatidylinositol-binding clathrin assembly protein LAP (468 aa).

Positions 16-158 (RHSLAGQGLA…LSYRAMAFDF (143 aa)) constitute an ENTH domain. The interval 438–468 (NAGDGTAKYDGGAGSSPFDWGATDDDGGAAQ) is disordered. Residues 459–468 (ATDDDGGAAQ) are compositionally biased toward acidic residues.

The protein belongs to the PICALM/SNAP91 family. In terms of assembly, binds clathrin and phosphatidylinositol 4,5-bisphosphate. In terms of tissue distribution, in embryos, expression is seen in central and peripheral nervous systems (brain and ventral nerve cord) and Garland cells. Coexpressed with clathrin at presynaptic boutons of neuromuscular junctions.

The protein resides in the membrane. It is found in the clathrin-coated pit. The protein localises to the golgi apparatus. It localises to the cytoplasmic vesicle. Its subcellular location is the clathrin-coated vesicle. Its function is as follows. Assembly protein recruiting clathrin and adaptor protein complex 2 (AP2) to cell membranes at sites of coated-pit formation and clathrin-vesicle assembly. May be required to determine the amount of membrane to be recycled, possibly by regulating the size of the clathrin cage. Involved in AP2-dependent clathrin-mediated endocytosis at the neuromuscular junction. This chain is Phosphatidylinositol-binding clathrin assembly protein LAP (lap), found in Drosophila melanogaster (Fruit fly).